An 82-amino-acid polypeptide reads, in one-letter code: Small ribosomal subunit protein bS16 (82 aa).

It belongs to the bacterial ribosomal protein bS16 family.

This Deinococcus deserti (strain DSM 17065 / CIP 109153 / LMG 22923 / VCD115) protein is Small ribosomal subunit protein bS16.